A 321-amino-acid polypeptide reads, in one-letter code: Tetraacyldisaccharide 4'-kinase (321 aa).

54–61 serves as a coordination point for ATP; it reads SVGGTGKT.

The protein belongs to the LpxK family.

The enzyme catalyses a lipid A disaccharide + ATP = a lipid IVA + ADP + H(+). The protein operates within glycolipid biosynthesis; lipid IV(A) biosynthesis; lipid IV(A) from (3R)-3-hydroxytetradecanoyl-[acyl-carrier-protein] and UDP-N-acetyl-alpha-D-glucosamine: step 6/6. Functionally, transfers the gamma-phosphate of ATP to the 4'-position of a tetraacyldisaccharide 1-phosphate intermediate (termed DS-1-P) to form tetraacyldisaccharide 1,4'-bis-phosphate (lipid IVA). In Rickettsia africae (strain ESF-5), this protein is Tetraacyldisaccharide 4'-kinase.